Consider the following 635-residue polypeptide: MAPVTIEKFVNQEERHLVSNRSATIPFGEYIFKRLLSIDTKSVFGVPGDFNLSLLEYLYSPSVESAGLRWVGTCNELNAAYAADGYSRYSNKIGCLITTYGVGELSALNGIAGSFAENVKVLHIVGVAKSIDSRSSNFSDRNLHHLVPQLHDSNFKGPNHKVYHDMVKDRVACSVAYLEDIETACDQVDNVIRDIYKYSKPGYIFVPADFADMSVTCDNLVNVPRISQQDCIVYPSENQLSDIINKITSWIYSSKTPAILGDVLTDRYGVSNFLNKLICKTGIWNFSTVMGKSVIDESNPTYMGQYNGKEGLKQVYEHFELCDLVLHFGVDINEINNGHYTFTYKPNAKIIQFHPNYIRLVDTRQGNEQMFKGINFAPILKELYKRIDVSKLSLQYDSNVTQYTNETMRLEDPTNGQSSIITQVHLQKTMPKFLNPGDVVVCETGSFQFSVRDFAFPSQLKYISQGFFLSIGMALPAALGVGIAMQDHSNAHINGGNVKEDYKPRLILFEGDGAAQMTIQELSTILKCNIPLEVIIWNNNGYTIERAIMGPTRSYNDVMSWKWTKLFEAFGDFDGKYTNSTLIQCPSKLALKLEELKNSNKRSGIELLEVKLGELDFPEQLKCMVEAAALKRNKK.

Lysine 588 participates in a covalent cross-link: Glycyl lysine isopeptide (Lys-Gly) (interchain with G-Cter in ubiquitin).

Belongs to the TPP enzyme family. Mg(2+) serves as cofactor. Requires thiamine diphosphate as cofactor.

It localises to the cytoplasm. It catalyses the reaction 4-methyl-2-oxopentanoate + H(+) = 3-methylbutanal + CO2. It carries out the reaction (S)-3-methyl-2-oxopentanoate + H(+) = 2-methylbutanal + CO2. The catalysed reaction is indole-3-pyruvate + H(+) = indole-3-acetaldehyde + CO2. The enzyme catalyses 3-phenylpyruvate + H(+) = 2-phenylacetaldehyde + CO2. It catalyses the reaction 4-methylsulfanyl-2-oxobutanoate + H(+) = 3-methylsulfanylpropanal + CO2. It carries out the reaction 3-(4-hydroxyphenyl)pyruvate + H(+) = (4-hydroxyphenyl)acetaldehyde + CO2. Its pathway is amino-acid degradation; Ehrlich pathway. In terms of biological role, one of five 2-oxo acid decarboxylases (PDC1, PDC5, PDC6, ARO10, and THI3) involved in amino acid catabolism. The enzyme catalyzes the decarboxylation of amino acids, which, in a first step, have been transaminated to the corresponding 2-oxo acids (alpha-keto-acids). In a third step, the resulting aldehydes are reduced to alcohols, collectively referred to as fusel oils or alcohols. Its preferred substrates are the transaminated amino acids derived from phenylalanine (phenylpyruvate), tryptophan (3-(indol-3-yl)pyruvate), and probably tyrosine (4-hydroxyphenylpyruvate), but also isoleucine ((3S)-3-methyl-2-oxopentanoate, also alpha-keto-beta-methylvalerate) and methionine (4-methylthio-2-oxobutanoate), whereas transaminated leucine (4-methyl-2-oxopentanoate, also alpha-keto-isocaproate) is a low efficiency substrate and transaminated valine and pyruvate are no substrates. In analogy to the pyruvate decarboxylases the enzyme may in a side-reaction catalyze condensation (or carboligation) reactions leading to the formation of 2-hydroxy ketone, collectively called acyloins. The protein is Transaminated amino acid decarboxylase (ARO10) of Saccharomyces cerevisiae (strain ATCC 204508 / S288c) (Baker's yeast).